The sequence spans 5634 residues: Hemicentin-1 (5634 aa).

Residues 1-21 (MIAQEVVHTVFLVALFRSSLA) form the signal peptide. The VWFA domain maps to 41-216 (TLAFVFDVTG…EVLKWVEEAV (176 aa)). Ig-like C2-type domains are found at residues 431–517 (PKVT…FDVS), 520–607 (PPII…VFLT), 612–697 (PKVT…STLR), 702–788 (PKLV…LTLD), 793–883 (PVFI…TTVT), 890–976 (PLIG…TSVA), 981–1067 (PSIQ…VQLT), 1072–1166 (PRVF…VKLS), 1171–1254 (PKIQ…AEVT), 1261–1353 (PSVE…YNLK), 1357–1446 (PPVI…FSVN), 1451–1540 (PSIL…IKLT), 1545–1633 (PSIK…FHVD), 1638–1723 (PTIE…REIK), 1732–1820 (PAVE…FEVT), 1825–1913 (PTIK…TQLH), 1918–2006 (PSLD…YSLQ), 2011–2096 (PSIS…RDID), 2103–2189 (PNIM…YNVN), 2194–2284 (PSIY…YNLQ), 2289–2378 (PSIT…YDLS), 2383–2472 (PSII…FGLS), 2477–2565 (PHIV…FRLN), 2570–2661 (PTIA…YEVK), 2665–2762 (PPII…VNIQ), 2765–2863 (PSFQ…YDVH), 2867–2958 (PPVI…FNLN), 2962–3050 (PPSV…VSLT), and 3055–3145 (PSIK…FHLN). 2 disulfide bridges follow: Cys-451–Cys-499 and Cys-541–Cys-591. O-linked (GalNAc...) threonine glycosylation is present at Thr-615. Cystine bridges form between Cys-633-Cys-681, Cys-723-Cys-772, Cys-814-Cys-867, Cys-911-Cys-960, Cys-1002-Cys-1051, Cys-1101-Cys-1150, Cys-1192-Cys-1240, Cys-1287-Cys-1337, Cys-1381-Cys-1430, Cys-1474-Cys-1524, and Cys-1568-Cys-1617. 2 O-linked (GalNAc...) threonine glycosylation sites follow: Thr-1292 and Thr-1386. Residue Thr-1639 is glycosylated (O-linked (GalNAc...) threonine). 2 disulfide bridges follow: Cys-1662-Cys-1711 and Cys-1755-Cys-1804. Thr-1826 carries O-linked (GalNAc...) threonine glycosylation. Disulfide bonds link Cys-1847–Cys-1897, Cys-1941–Cys-1990, Cys-2032–Cys-2082, Cys-2124–Cys-2173, Cys-2217–Cys-2268, Cys-2313–Cys-2362, Cys-2407–Cys-2456, Cys-2500–Cys-2549, Cys-2596–Cys-2645, Cys-2695–Cys-2744, Cys-2798–Cys-2847, Cys-2893–Cys-2942, Cys-2985–Cys-3034, and Cys-3080–Cys-3129. O-linked (GalNAc...) threonine glycosylation occurs at Thr-3151. Ig-like C2-type domains are found at residues 3155 to 3227 (PETE…VASN), 3244 to 3334 (PSVA…FNLN), 3339 to 3428 (PKIR…YSLQ), 3433 to 3515 (PNMD…GEVS), 3526 to 3614 (PHIN…YLVR), 3619 to 3707 (PNIA…FNLT), 3712 to 3798 (PSIG…IDLQ), 3803 to 3891 (PSIA…VDLT), 3896 to 3982 (PTIA…VTLR), 3987 to 4073 (PVIQ…VKLN), 4077 to 4163 (PPVI…STLT), 4168 to 4252 (PRIQ…RIVT), 4259 to 4332 (PTFT…AENS), 4347 to 4434 (PPVF…MSLT), and 4439 to 4526 (PIIT…VIVQ). 8 disulfides stabilise this stretch: Cys-3172–Cys-3223, Cys-3267–Cys-3318, Cys-3363–Cys-3412, Cys-3456–Cys-3505, Cys-3549–Cys-3598, Cys-3642–Cys-3691, Cys-3733–Cys-3782, and Cys-3824–Cys-3875. Residue Thr-3897 is glycosylated (O-linked (GalNAc...) threonine). Cystine bridges form between Cys-3917–Cys-3966, Cys-4008–Cys-4057, Cys-4099–Cys-4147, Cys-4189–Cys-4238, Cys-4280–Cys-4327, Cys-4370–Cys-4418, Cys-4460–Cys-4508, Cys-4540–Cys-4577, Cys-4544–Cys-4582, Cys-4555–Cys-4567, Cys-4597–Cys-4634, Cys-4601–Cys-4639, Cys-4612–Cys-4624, Cys-4654–Cys-4691, Cys-4658–Cys-4696, Cys-4669–Cys-4681, Cys-4711–Cys-4748, Cys-4715–Cys-4753, Cys-4726–Cys-4738, Cys-4768–Cys-4805, Cys-4772–Cys-4810, Cys-4783–Cys-4795, Cys-4825–Cys-4862, Cys-4829–Cys-4867, and Cys-4840–Cys-4852. Thr-4379 carries an O-linked (GalNAc...) threonine glycan. TSP type-1 domains follow at residues 4528-4583 (HGGF…KLCP), 4585-4640 (DGHW…RPCP), 4642-4697 (HGVW…RHCP), 4699-4754 (DGRW…DPCP), 4756-4811 (HGNW…DMCP), and 4813-4868 (DGSW…QACP). Residues 4870–5092 (GPQRARGSVI…SKGDRSNQCP (223 aa)) form the Nidogen G2 beta-barrel domain. The 40-residue stretch at 5106 to 5145 (DEDECTAGNPCSHTCHNAIGAYYCSCPKGLTIAADGRTCQ) folds into the EGF-like 1; calcium-binding domain. Intrachain disulfides connect Cys-5110-Cys-5120, Cys-5116-Cys-5129, and Cys-5131-Cys-5144. In terms of domain architecture, EGF-like 2; calcium-binding spans 5146–5189 (DIDECALGGHTCRAGQDCDNTIGSYRCVVHCGTGFRRTSDGLSC). Residues 5191–5228 (DINECQESSPCHQRCFNVIGSFHCGCEAGYQLKGRKCI) form the EGF-like 3; calcium-binding domain. 3 cysteine pairs are disulfide-bonded: Cys-5195–Cys-5205, Cys-5201–Cys-5214, and Cys-5216–Cys-5227. The 41-residue stretch at 5229-5269 (DVNECRQNVCRPDQHCKNTRGGYKCIDLCPSGMTKAENGTC) folds into the EGF-like 4; calcium-binding domain. Residues 5271 to 5306 (DIDECKDGTHQCRYNQICENTRGSYRCACPRGYRSQ) enclose the EGF-like 5; calcium-binding domain. Cystine bridges form between Cys-5275–Cys-5288, Cys-5282–Cys-5297, Cys-5318–Cys-5329, Cys-5325–Cys-5338, Cys-5340–Cys-5353, Cys-5435–Cys-5445, Cys-5441–Cys-5454, and Cys-5456–Cys-5469. The 41-residue stretch at 5314 to 5354 (DINECEQVPKPCAHQCSNSPGSFKCICLPGQQLLGDGKSCA) folds into the EGF-like 6; calcium-binding domain. In terms of domain architecture, EGF-like 7; calcium-binding spans 5431-5470 (DIDECQNRDTCQHECKNTIGSYQCVCPPGYRLMLNGKTCQ).

As to expression, in the kidney, expressed in the glomerulus (at protein level). Expressed in whisker and hair follicles, eye, tongue, and splenic and lymph node conduits (at protein level). In the embryo, localizes to the cleavage furrow at the two-cell stage (at protein level). In neonatal skin, expressed throughout the dermis (at protein level). In adult skin, strongly concentrated at the dermal side of the basement membrane but not detectable in the deeper dermis. Shows tendon-specific localization at the myotendinous junction and is also detected in the perichondrium (at protein level). Expressed by chondrocytes residing in articular cartilage and the femoral growth plate of 52 week old mice (at protein level). Expressed in vascular endothelial cells in coronary arteries and sparsely in endocardial endothelium (at protein level). Expressed in skin, tongue, lung and eye. At 14.5 dpc, expressed in the vibrissae, dermis, forelimb, kidney, intestine, lung and iliac cartilage where expression is found mainly in mesenchymal cells.

It is found in the secreted. Its subcellular location is the extracellular space. The protein resides in the extracellular matrix. The protein localises to the basement membrane. It localises to the cytoplasm. It is found in the cell junction. Its subcellular location is the cleavage furrow. Involved in transforming growth factor beta-mediated rearrangement of the podocyte cytoskeleton which includes reduction of F-actin fibers and broadening, flattening and elongation of podocytes. Plays a role in basement membrane organization. May promote cleavage furrow maturation during cytokinesis in preimplantation embryos. May play a role in the architecture of adhesive and flexible epithelial cell junctions. May play a role during myocardial remodeling by imparting an effect on cardiac fibroblast migration. The protein is Hemicentin-1 of Mus musculus (Mouse).